Reading from the N-terminus, the 288-residue chain is HTH-type transcriptional regulator CzcR (288 aa).

The 58-residue stretch at 1 to 58 (MELRDLQIFQSVADQGSVSSAAKELNYVQSNVTARIKQLENELKTPLFYRHKRGMTLT) folds into the HTH lysR-type domain. The H-T-H motif DNA-binding region spans 18-37 (VSSAAKELNYVQSNVTARIK).

Belongs to the LysR transcriptional regulatory family.

The chain is HTH-type transcriptional regulator CzcR (czcR) from Bacillus anthracis.